Here is a 245-residue protein sequence, read N- to C-terminus: Cysteine-rich secretory protein 3 (245 aa).

The first 22 residues, 1 to 22 (MALLPVLLFLAAVLLPFFPASG), serve as a signal peptide directing secretion. Residues 42 to 171 (VNKHNDLRRT…TLKYYYVCQY (130 aa)) enclose the SCP domain. Cystine bridges form between cysteine 191-cysteine 198, cysteine 194-cysteine 203, cysteine 207-cysteine 240, cysteine 216-cysteine 234, and cysteine 225-cysteine 238. In terms of domain architecture, ShKT spans 207–240 (CEYEDLVSNCDSLKKIAGCEHELLKENCKTTCQC).

It belongs to the CRISP family. Interacts with A1BG. In terms of tissue distribution, expressed in the salivary gland, in the ampulla and the seminal vesicle.

Its subcellular location is the secreted. The polypeptide is Cysteine-rich secretory protein 3 (CRISP3) (Equus caballus (Horse)).